Reading from the N-terminus, the 1760-residue chain is Chitin synthase csmB (1760 aa).

Over residues 1-17 (MSNRFSVYSSHSTGVSS) the composition is skewed to low complexity. The disordered stretch occupies residues 1 to 23 (MSNRFSVYSSHSTGVSSARPSAP). Residues 1 to 374 (MSNRFSVYSS…TVSITVVDIP (374 aa)) enclose the Myosin motor domain. N-linked (GlcNAc...) asparagine glycosylation is present at asparagine 275. The disordered stretch occupies residues 344-363 (LDNDPSTSGGSGPGGQWTDD). A region of interest (actin-binding) is located at residue proline 374. A run of 2 helical transmembrane segments spans residues 731 to 751 (IWVG…LRWI) and 767 to 787 (LVLM…IIAF). Residues asparagine 878, asparagine 906, and asparagine 995 are each glycosylated (N-linked (GlcNAc...) asparagine). A helical membrane pass occupies residues 1029 to 1049 (ILLSFTVLICAVILVKFVSAL). Residue asparagine 1394 is glycosylated (N-linked (GlcNAc...) asparagine). Helical transmembrane passes span 1419–1439 (FVVL…VYLG), 1452–1472 (FPMI…IIFL), and 1480–1500 (IGWM…LPLY). N-linked (GlcNAc...) asparagine glycans are attached at residues asparagine 1584 and asparagine 1652. Positions 1702-1758 (GPDEGAITEAIRACLAEVDLDTVTKKQVRALVEQRLQTTLMGDKRTFLDRQIDHELA) constitute a DEK-C domain.

This sequence in the N-terminal section; belongs to the TRAFAC class myosin-kinesin ATPase superfamily. Myosin family. It in the C-terminal section; belongs to the chitin synthase family. Class V subfamily.

The protein resides in the cell membrane. The protein localises to the cell septum. It is found in the cell tip. It carries out the reaction [(1-&gt;4)-N-acetyl-beta-D-glucosaminyl](n) + UDP-N-acetyl-alpha-D-glucosamine = [(1-&gt;4)-N-acetyl-beta-D-glucosaminyl](n+1) + UDP + H(+). In terms of biological role, polymerizes chitin, a structural polymer of the cell wall and septum, by transferring the sugar moiety of UDP-GlcNAc to the non-reducing end of the growing chitin polymer. Plays an important role in septal growth or maintenance. Mediates colony spore formation. The protein is Chitin synthase csmB of Aspergillus niger (strain ATCC MYA-4892 / CBS 513.88 / FGSC A1513).